A 424-amino-acid polypeptide reads, in one-letter code: 3-ketoacyl-CoA thiolase A, peroxisomal (424 aa).

A peroxisome-targeting transit peptide spans 1-26 (MHRLQVVLGHLAGRPESSSALQAAPC). The interval 1–26 (MHRLQVVLGHLAGRPESSSALQAAPC) is PTS2-type peroxisomal targeting signal. The active-site Acyl-thioester intermediate is C123. N6-acetyllysine occurs at positions 173 and 234. Residues H377 and C408 each act as proton acceptor in the active site.

This sequence belongs to the thiolase-like superfamily. Thiolase family. In terms of assembly, homodimer. Interacts (via PTS2-type peroxisomal targeting signal region) with PEX7; leading to its translocation into peroxisomes. In terms of tissue distribution, mainly expressed in liver and intestine.

It localises to the peroxisome. The enzyme catalyses an acyl-CoA + acetyl-CoA = a 3-oxoacyl-CoA + CoA. It catalyses the reaction 2 acetyl-CoA = acetoacetyl-CoA + CoA. The catalysed reaction is tetradecanoyl-CoA + acetyl-CoA = 3-oxohexadecanoyl-CoA + CoA. It carries out the reaction hexanoyl-CoA + acetyl-CoA = 3-oxooctanoyl-CoA + CoA. The enzyme catalyses 3-oxohexadecanedioyl-CoA + CoA = tetradecanedioyl-CoA + acetyl-CoA. It catalyses the reaction 3-oxo-(6Z,9Z,12Z,15Z,18Z,21Z)-tetracosahexaenoyl-CoA + CoA = (4Z,7Z,10Z,13Z,16Z,19Z)-docosahexaenoyl-CoA + acetyl-CoA. The protein operates within lipid metabolism; peroxisomal fatty acid beta-oxidation. Functionally, responsible for the thiolytic cleavage of straight chain 3-keto fatty acyl-CoAs (3-oxoacyl-CoAs). Plays an important role in fatty acid peroxisomal beta-oxidation. Catalyzes the cleavage of short, medium, long, and very long straight chain 3-oxoacyl-CoAs. This Mus musculus (Mouse) protein is 3-ketoacyl-CoA thiolase A, peroxisomal.